The following is a 581-amino-acid chain: Putative aluminum-activated malate transporter 3 (581 aa).

6 helical membrane-spanning segments follow: residues 98-118 (MGLA…GLEL), 122-142 (YLWA…ATFS), 148-164 (GLGT…MSWI), 167-187 (MTGN…AFFA), 201-218 (YGFR…VSGY), and 231-251 (FLLI…IYPI).

Belongs to the aromatic acid exporter (TC 2.A.85) family.

It localises to the membrane. Its function is as follows. Malate transporter. The chain is Putative aluminum-activated malate transporter 3 (ALMT3) from Arabidopsis thaliana (Mouse-ear cress).